Reading from the N-terminus, the 809-residue chain is Sucrose synthase 4 (809 aa).

The tract at residues 275-753 (MIFNVVVVSP…GLQRIYEKYT (479 aa)) is GT-B glycosyltransferase.

It belongs to the glycosyltransferase 1 family. Plant sucrose synthase subfamily. As to expression, predominantly expressed in the leaf tissues and in caryopses.

It catalyses the reaction an NDP-alpha-D-glucose + D-fructose = a ribonucleoside 5'-diphosphate + sucrose + H(+). In terms of biological role, sucrose-cleaving enzyme that provides UDP-glucose and fructose for various metabolic pathways. This Oryza sativa subsp. japonica (Rice) protein is Sucrose synthase 4 (SUS4).